A 110-amino-acid polypeptide reads, in one-letter code: Protein RnfH (110 aa).

The disordered stretch occupies residues 90–110; that stretch reads VDKTRREGSIEGRKWLPKDSR.

It belongs to the UPF0125 (RnfH) family.

This chain is Protein RnfH, found in Burkholderia mallei (strain NCTC 10229).